The following is a 547-amino-acid chain: Chaperonin GroEL (547 aa).

ATP-binding positions include 30-33 (TLGP), Lys-51, 87-91 (DGTTT), Gly-415, and Asp-496. The segment at 528-547 (KEGAGAGGGMPDMGGMGGMM) is disordered. Residues 531-547 (AGAGGGMPDMGGMGGMM) are compositionally biased toward gly residues.

It belongs to the chaperonin (HSP60) family. In terms of assembly, forms a cylinder of 14 subunits composed of two heptameric rings stacked back-to-back. Interacts with the co-chaperonin GroES.

The protein resides in the cytoplasm. The enzyme catalyses ATP + H2O + a folded polypeptide = ADP + phosphate + an unfolded polypeptide.. Together with its co-chaperonin GroES, plays an essential role in assisting protein folding. The GroEL-GroES system forms a nano-cage that allows encapsulation of the non-native substrate proteins and provides a physical environment optimized to promote and accelerate protein folding. This Dinoroseobacter shibae (strain DSM 16493 / NCIMB 14021 / DFL 12) protein is Chaperonin GroEL.